Reading from the N-terminus, the 309-residue chain is UDP-N-acetylenolpyruvoylglucosamine reductase (309 aa).

Residues 33–198 (RVGGPAQVLF…TSARFRGTPA (166 aa)) form the FAD-binding PCMH-type domain. The active site involves Arg-178. Ser-227 functions as the Proton donor in the catalytic mechanism. Glu-297 is an active-site residue.

Belongs to the MurB family. The cofactor is FAD.

It is found in the cytoplasm. It catalyses the reaction UDP-N-acetyl-alpha-D-muramate + NADP(+) = UDP-N-acetyl-3-O-(1-carboxyvinyl)-alpha-D-glucosamine + NADPH + H(+). It participates in cell wall biogenesis; peptidoglycan biosynthesis. Functionally, cell wall formation. This Rhodopseudomonas palustris (strain HaA2) protein is UDP-N-acetylenolpyruvoylglucosamine reductase.